A 355-amino-acid chain; its full sequence is UDP-N-acetylglucosamine--N-acetylmuramyl-(pentapeptide) pyrophosphoryl-undecaprenol N-acetylglucosamine transferase (355 aa).

Residues 15–17 (TGG), Asn127, Arg163, Ser191, Ile244, 263–268 (ALTVSE), and Gln288 contribute to the UDP-N-acetyl-alpha-D-glucosamine site.

The protein belongs to the glycosyltransferase 28 family. MurG subfamily.

The protein localises to the cell inner membrane. It carries out the reaction di-trans,octa-cis-undecaprenyl diphospho-N-acetyl-alpha-D-muramoyl-L-alanyl-D-glutamyl-meso-2,6-diaminopimeloyl-D-alanyl-D-alanine + UDP-N-acetyl-alpha-D-glucosamine = di-trans,octa-cis-undecaprenyl diphospho-[N-acetyl-alpha-D-glucosaminyl-(1-&gt;4)]-N-acetyl-alpha-D-muramoyl-L-alanyl-D-glutamyl-meso-2,6-diaminopimeloyl-D-alanyl-D-alanine + UDP + H(+). Its pathway is cell wall biogenesis; peptidoglycan biosynthesis. Its function is as follows. Cell wall formation. Catalyzes the transfer of a GlcNAc subunit on undecaprenyl-pyrophosphoryl-MurNAc-pentapeptide (lipid intermediate I) to form undecaprenyl-pyrophosphoryl-MurNAc-(pentapeptide)GlcNAc (lipid intermediate II). The chain is UDP-N-acetylglucosamine--N-acetylmuramyl-(pentapeptide) pyrophosphoryl-undecaprenol N-acetylglucosamine transferase from Escherichia coli O9:H4 (strain HS).